Here is a 639-residue protein sequence, read N- to C-terminus: MADDKFTLPLRPLIEKRDRPDPLPLEIAQINAQWGSFRDVSEESLRAKIEEEKSKEYTIEEEEGEGAGAELDTTERLDQLYKRRAEIIQFAMQAHMEAMFALDFISLLLSKHTPRQAETSMSAYLKQVAPLGSLNSEIISPPPKSEAVVRDTKTVSRGWRLQNFNAAADKLLKSASRLENEVASETRYWHEVLAVKDKGWKLCRLPRQGQTLGVQYGFLEATPIFRDRGLAALRRSQDGALILDKGLVPMKAKTVRVRVKDHGIITGCSKPYRSAAQDPDSIEGRILQARDTLFEEELFHELFREARIMGSQGVTTRQNMVQFPVSEEQDILLDLVDPYQEAYVDDEETKSEEHNVLADALAHSIRILLCYAHRQNLRRRTQPPPALSPRRRHIPEYQLLRPIMAYLQHSFHVRWLETFMKDVYGVLQSAGLSCSFTATPYSSVNLSNSDRSVPKVEGLIRQFLLPLETTFSADLLTPQSSFKVKTRTNLSVPPFGTHFEILLNLPHYPDVHSPHRIGLHDQAATIITHFIMLDIVAAIESQTSPASSISKTEAKSVSWEATYPHHGELLSVSIDGKQKKMKVILSRDELTVQTYDVQGVERYSRATPETTPGLQTHTWKAGPTTAPGLMEYVAAVSQR.

Residues 160–187 (RLQNFNAAADKLLKSASRLENEVASETR) are a coiled coil.

The protein belongs to the Mediator complex subunit 17 family. As to quaternary structure, component of the Mediator complex.

The protein localises to the nucleus. Functionally, component of the Mediator complex, a coactivator involved in the regulated transcription of nearly all RNA polymerase II-dependent genes. Mediator functions as a bridge to convey information from gene-specific regulatory proteins to the basal RNA polymerase II transcription machinery. Mediator is recruited to promoters by direct interactions with regulatory proteins and serves as a scaffold for the assembly of a functional preinitiation complex with RNA polymerase II and the general transcription factors. This Neosartorya fischeri (strain ATCC 1020 / DSM 3700 / CBS 544.65 / FGSC A1164 / JCM 1740 / NRRL 181 / WB 181) (Aspergillus fischerianus) protein is Mediator of RNA polymerase II transcription subunit 17 (srb4).